Reading from the N-terminus, the 102-residue chain is Large ribosomal subunit protein eL31 (102 aa).

It belongs to the eukaryotic ribosomal protein eL31 family.

In Staphylothermus marinus (strain ATCC 43588 / DSM 3639 / JCM 9404 / F1), this protein is Large ribosomal subunit protein eL31.